The chain runs to 419 residues: Inositol-tetrakisphosphate 1-kinase (419 aa).

Residue lysine 18 participates in 1D-myo-inositol 1,3,4-trisphosphate binding. 2 residues coordinate ATP: arginine 106 and lysine 157. The ATP-grasp domain occupies 117–334; sequence EAYMKDDRIC…TGGAATEEVA (218 aa). 2 residues coordinate 1D-myo-inositol 1,3,4-trisphosphate: histidine 167 and lysine 199. Residues 188 to 199, serine 214, serine 232, and serine 236 contribute to the ATP site; that span reads QNFINHNAVLYK. The Mg(2+) site is built by aspartate 281, aspartate 295, and asparagine 297. Asparagine 297 serves as a coordination point for 1D-myo-inositol 1,3,4-trisphosphate. Position 388 is an N6-acetyllysine; by EP300 and CREBBP (lysine 388). Serine 401 carries the phosphoserine modification. Lysine 415 is modified (N6-acetyllysine; by EP300 and CREBBP).

It belongs to the ITPK1 family. Monomer. Interacts with GPS1/COPS1. It depends on Mg(2+) as a cofactor. Acetylation by EP300 and CREBBP destabilizes ITPK1, and down-regulates enzymatic activity. Deacetylated by SIRT1.

The enzyme catalyses 1D-myo-inositol 3,4,5,6-tetrakisphosphate + ATP = 1D-myo-inositol 1,3,4,5,6-pentakisphosphate + ADP + H(+). The catalysed reaction is 1D-myo-inositol 1,3,4-trisphosphate + ATP = 1D-myo-inositol 1,3,4,5-tetrakisphosphate + ADP + H(+). It catalyses the reaction 1D-myo-inositol 1,3,4-trisphosphate + ATP = 1D-myo-inositol 1,3,4,6-tetrakisphosphate + ADP + H(+). It carries out the reaction 1D-myo-inositol 3,4,6-trisphosphate + ATP = 1D-myo-inositol 1,3,4,6-tetrakisphosphate + ADP + H(+). The enzyme catalyses 1D-myo-inositol 1,3,4-trisphosphate + 1D-myo-inositol 1,3,4,5,6-pentakisphosphate = 1D-myo-inositol 3,4,5,6-tetrakisphosphate + 1D-myo-inositol 1,3,4,6-tetrakisphosphate. The catalysed reaction is 1D-myo-inositol 1,3,4-trisphosphate + 1D-myo-inositol 1,3,4,5,6-pentakisphosphate = 1D-myo-inositol 3,4,5,6-tetrakisphosphate + 1D-myo-inositol 1,3,4,5-tetrakisphosphate. In terms of biological role, kinase that can phosphorylate various inositol polyphosphate such as Ins(3,4,5,6)P4 or Ins(1,3,4)P3. Phosphorylates Ins(3,4,5,6)P4 at position 1 to form Ins(1,3,4,5,6)P5. This reaction is thought to have regulatory importance, since Ins(3,4,5,6)P4 is an inhibitor of plasma membrane Ca(2+)-activated Cl(-) channels, while Ins(1,3,4,5,6)P5 is not. Also phosphorylates Ins(1,3,4)P3 on O-5 and O-6 to form Ins(1,3,4,6)P4, an essential molecule in the hexakisphosphate (InsP6) pathway. Also acts as an inositol polyphosphate phosphatase that dephosphorylates Ins(1,3,4,5)P4 and Ins(1,3,4,6)P4 to Ins(1,3,4)P3, and Ins(1,3,4,5,6)P5 to Ins(3,4,5,6)P4. May also act as an isomerase that interconverts the inositol tetrakisphosphate isomers Ins(1,3,4,5)P4 and Ins(1,3,4,6)P4 in the presence of ADP and magnesium. Probably acts as the rate-limiting enzyme of the InsP6 pathway. Modifies TNF-alpha-induced apoptosis by interfering with the activation of TNFRSF1A-associated death domain. Plays an important role in MLKL-mediated necroptosis. Produces highly phosphorylated inositol phosphates such as inositolhexakisphosphate (InsP6) which bind to MLKL mediating the release of an N-terminal auto-inhibitory region leading to its activation. Essential for activated phospho-MLKL to oligomerize and localize to the cell membrane during necroptosis. This Mus musculus (Mouse) protein is Inositol-tetrakisphosphate 1-kinase.